The following is a 600-amino-acid chain: Elongation factor 4 (600 aa).

The region spanning 5-187 (SHIRNFSIVA…ALVNRLPCPE (183 aa)) is the tr-type G domain. GTP contacts are provided by residues 17-22 (DHGKST) and 134-137 (NKID).

The protein belongs to the TRAFAC class translation factor GTPase superfamily. Classic translation factor GTPase family. LepA subfamily.

It localises to the cell inner membrane. The catalysed reaction is GTP + H2O = GDP + phosphate + H(+). Functionally, required for accurate and efficient protein synthesis under certain stress conditions. May act as a fidelity factor of the translation reaction, by catalyzing a one-codon backward translocation of tRNAs on improperly translocated ribosomes. Back-translocation proceeds from a post-translocation (POST) complex to a pre-translocation (PRE) complex, thus giving elongation factor G a second chance to translocate the tRNAs correctly. Binds to ribosomes in a GTP-dependent manner. This chain is Elongation factor 4, found in Paramagnetospirillum magneticum (strain ATCC 700264 / AMB-1) (Magnetospirillum magneticum).